Here is a 425-residue protein sequence, read N- to C-terminus: Enolase (425 aa).

A (2R)-2-phosphoglycerate-binding site is contributed by Q162. Residue E204 is the Proton donor of the active site. Mg(2+) contacts are provided by D241, E282, and D309. The (2R)-2-phosphoglycerate site is built by K334, R363, S364, and K385. K334 serves as the catalytic Proton acceptor.

The protein belongs to the enolase family. The cofactor is Mg(2+).

The protein localises to the cytoplasm. It localises to the secreted. It is found in the cell surface. The catalysed reaction is (2R)-2-phosphoglycerate = phosphoenolpyruvate + H2O. Its pathway is carbohydrate degradation; glycolysis; pyruvate from D-glyceraldehyde 3-phosphate: step 4/5. In terms of biological role, catalyzes the reversible conversion of 2-phosphoglycerate (2-PG) into phosphoenolpyruvate (PEP). It is essential for the degradation of carbohydrates via glycolysis. The chain is Enolase from Corynebacterium diphtheriae (strain ATCC 700971 / NCTC 13129 / Biotype gravis).